The chain runs to 199 residues: NADH-quinone oxidoreductase subunit C (199 aa).

Belongs to the complex I 30 kDa subunit family. In terms of assembly, NDH-1 is composed of 14 different subunits. Subunits NuoB, C, D, E, F, and G constitute the peripheral sector of the complex.

It localises to the cell inner membrane. The catalysed reaction is a quinone + NADH + 5 H(+)(in) = a quinol + NAD(+) + 4 H(+)(out). In terms of biological role, NDH-1 shuttles electrons from NADH, via FMN and iron-sulfur (Fe-S) centers, to quinones in the respiratory chain. The immediate electron acceptor for the enzyme in this species is believed to be ubiquinone. Couples the redox reaction to proton translocation (for every two electrons transferred, four hydrogen ions are translocated across the cytoplasmic membrane), and thus conserves the redox energy in a proton gradient. The sequence is that of NADH-quinone oxidoreductase subunit C from Rhodopseudomonas palustris (strain BisB18).